The primary structure comprises 286 residues: Bifunctional protein FolD (286 aa).

Residue 166 to 168 (GAS) participates in NADP(+) binding.

Belongs to the tetrahydrofolate dehydrogenase/cyclohydrolase family. In terms of assembly, homodimer.

It carries out the reaction (6R)-5,10-methylene-5,6,7,8-tetrahydrofolate + NADP(+) = (6R)-5,10-methenyltetrahydrofolate + NADPH. The catalysed reaction is (6R)-5,10-methenyltetrahydrofolate + H2O = (6R)-10-formyltetrahydrofolate + H(+). It participates in one-carbon metabolism; tetrahydrofolate interconversion. In terms of biological role, catalyzes the oxidation of 5,10-methylenetetrahydrofolate to 5,10-methenyltetrahydrofolate and then the hydrolysis of 5,10-methenyltetrahydrofolate to 10-formyltetrahydrofolate. The sequence is that of Bifunctional protein FolD from Idiomarina loihiensis (strain ATCC BAA-735 / DSM 15497 / L2-TR).